The sequence spans 230 residues: RING finger protein 141 (230 aa).

The N-myristoyl glycine moiety is linked to residue Gly2. Residues 155–192 form an RING-type zinc finger; it reads CCICMDGRADLILPCAHSFCQKCIDKWSDRHRNCPICR.

Isoform 1 is testis-specific. Isoform 2 is expressed in heart, brain, skeletal muscle, kidney, pancreas, lung, liver and testis. Isoform 3 is expressed in heart, liver, and kidney.

Its subcellular location is the membrane. In terms of biological role, may be involved in spermatogenesis. The polypeptide is RING finger protein 141 (Rnf141) (Mus musculus (Mouse)).